The chain runs to 173 residues: Crossover junction endodeoxyribonuclease RuvC (173 aa).

Catalysis depends on residues Asp-8, Glu-67, and Asp-139. Residues Asp-8, Glu-67, and Asp-139 each contribute to the Mg(2+) site.

It belongs to the RuvC family. Homodimer which binds Holliday junction (HJ) DNA. The HJ becomes 2-fold symmetrical on binding to RuvC with unstacked arms; it has a different conformation from HJ DNA in complex with RuvA. In the full resolvosome a probable DNA-RuvA(4)-RuvB(12)-RuvC(2) complex forms which resolves the HJ. Mg(2+) serves as cofactor.

It is found in the cytoplasm. It carries out the reaction Endonucleolytic cleavage at a junction such as a reciprocal single-stranded crossover between two homologous DNA duplexes (Holliday junction).. In terms of biological role, the RuvA-RuvB-RuvC complex processes Holliday junction (HJ) DNA during genetic recombination and DNA repair. Endonuclease that resolves HJ intermediates. Cleaves cruciform DNA by making single-stranded nicks across the HJ at symmetrical positions within the homologous arms, yielding a 5'-phosphate and a 3'-hydroxyl group; requires a central core of homology in the junction. The consensus cleavage sequence is 5'-(A/T)TT(C/G)-3'. Cleavage occurs on the 3'-side of the TT dinucleotide at the point of strand exchange. HJ branch migration catalyzed by RuvA-RuvB allows RuvC to scan DNA until it finds its consensus sequence, where it cleaves and resolves the cruciform DNA. This Pseudoalteromonas atlantica (strain T6c / ATCC BAA-1087) protein is Crossover junction endodeoxyribonuclease RuvC.